The following is a 347-amino-acid chain: N-acetyl-gamma-glutamyl-phosphate reductase (347 aa).

Residue cysteine 153 is part of the active site.

It belongs to the NAGSA dehydrogenase family. Type 1 subfamily.

Its subcellular location is the cytoplasm. The catalysed reaction is N-acetyl-L-glutamate 5-semialdehyde + phosphate + NADP(+) = N-acetyl-L-glutamyl 5-phosphate + NADPH + H(+). The protein operates within amino-acid biosynthesis; L-arginine biosynthesis; N(2)-acetyl-L-ornithine from L-glutamate: step 3/4. In terms of biological role, catalyzes the NADPH-dependent reduction of N-acetyl-5-glutamyl phosphate to yield N-acetyl-L-glutamate 5-semialdehyde. The sequence is that of N-acetyl-gamma-glutamyl-phosphate reductase from Mycobacterium leprae (strain Br4923).